Consider the following 257-residue polypeptide: UPF0246 protein YaaA (257 aa).

The protein belongs to the UPF0246 family.

The polypeptide is UPF0246 protein YaaA (Salmonella agona (strain SL483)).